Reading from the N-terminus, the 338-residue chain is Fructose-1,6-bisphosphatase class 1 (338 aa).

Residues E90, D112, L114, and D115 each contribute to the Mg(2+) site. Residues 115–118 (DGSS), N207, and K273 contribute to the substrate site. Position 279 (E279) interacts with Mg(2+).

The protein belongs to the FBPase class 1 family. As to quaternary structure, homotetramer. Requires Mg(2+) as cofactor.

It localises to the cytoplasm. The catalysed reaction is beta-D-fructose 1,6-bisphosphate + H2O = beta-D-fructose 6-phosphate + phosphate. Its pathway is carbohydrate biosynthesis; gluconeogenesis. The polypeptide is Fructose-1,6-bisphosphatase class 1 (Xanthomonas campestris pv. campestris (strain 8004)).